The sequence spans 796 residues: Peroxisome proliferator-activated receptor gamma coactivator 1-alpha (796 aa).

The residue at position 77 (lysine 77) is an N6-acetyllysine. Positions 98–138 are disordered; it reads PVDEDGLPSFDALTDGDVTTENEASPSSMPDGTPPPQEAEE. Polar residues predominate over residues 114–127; the sequence is DVTTENEASPSSMP. The short motif at 142 to 146 is the LXXLL motif element; the sequence is LKKLL. An N6-acetyllysine modification is found at lysine 144. The residue at position 176 (threonine 176) is a Phosphothreonine; by AMPK. Lysine 182 is subject to N6-acetyllysine. The segment at 211-275 is disordered; it reads YLTTNDDPPH…NDPKGSPFEN (65 aa). Basic and acidic residues predominate over residues 217–235; sequence DPPHTKPTENRNSSRDKCT. A compositionally biased stretch (polar residues) spans 242–258; the sequence is TQSQTQHLQAKPTTLSL. 4 positions are modified to N6-acetyllysine: lysine 252, lysine 269, lysine 276, and lysine 319. Disordered regions lie at residues 288 to 374 and 398 to 452; these read GTAG…AKRP and TSQE…RKQL. Residues 291–337 form an interaction with PPARG region; sequence GLTPPTTPPHKANQDNPFRASPKLKPSCKTVVPPPSKKARYSESSCT. A compositionally biased stretch (polar residues) spans 332 to 344; that stretch reads SESSCTQGSNSTK. N6-acetyllysine is present on residues lysine 345 and lysine 411. The segment at 348–796 is mediates interaction with RNF34; the sequence is EQSELYAQLS…LKEAQRSLRR (449 aa). The span at 401 to 412 shows a compositional bias: basic and acidic residues; it reads ELHDSRQLENKD. Polar residues-rich tracts occupy residues 413-428 and 439-450; these read APSS…STDS and VSRQVSPGSTRK. The residue at position 450 (lysine 450) is an N6-acetyllysine. Serine 538 carries the post-translational modification Phosphoserine; by AMPK. Disordered stretches follow at residues 542 to 597, 609 to 637, and 648 to 667; these read FNSP…SSSR, HRTH…SYEE, and YRRE…ERQR. Basic residues predominate over residues 562–577; sequence QRMRSRSRSFSRHRSC. Low complexity predominate over residues 578-597; that stretch reads SRSPYSRSRSRSPGSRSSSR. The region spanning 675 to 751 is the RRM domain; that stretch reads RVIYVGKIRP…TDFELYFCGR (77 aa). Lysine 756 and lysine 777 each carry N6-acetyllysine.

In terms of assembly, homooligomer. Interacts with MYBBP1A; inhibits MYBBP1A transcriptional activation. Interacts with PRDM16, LPIN1 and PML. Interacts (via LXXLL motif) with RORA and RORC (via AF-2 motif); activates RORA and RORC transcriptional activation. Interacts with LRPPRC. Interacts with FOXO1. Interacts with NR5A2. In terms of processing, phosphorylation by AMPK in skeletal muscle increases activation of its own promoter. Phosphorylated by CLK2. Post-translationally, heavily acetylated by KAT2A/GCN5 under conditions of high nutrients, leading to inactivation of PPARGC1A. Deacetylated by SIRT1 in low nutrients/high NAD conditions, leading to its activation. Ubiquitinated. Ubiquitination by RNF34 induces proteasomal degradation.

The protein resides in the nucleus. The protein localises to the PML body. Transcriptional coactivator for steroid receptors and nuclear receptors. Greatly increases the transcriptional activity of PPARG and thyroid hormone receptor on the uncoupling protein promoter. Can regulate key mitochondrial genes that contribute to the program of adaptive thermogenesis. Plays an essential role in metabolic reprogramming in response to dietary availability through coordination of the expression of a wide array of genes involved in glucose and fatty acid metabolism. Acts as a key regulator of gluconeogenesis: stimulates hepatic gluconeogenesis by increasing the expression of gluconeogenic enzymes, and acting together with FOXO1 to promote the fasting gluconeogenic program. Induces the expression of PERM1 in the skeletal muscle in an ESRRA-dependent manner. Also involved in the integration of the circadian rhythms and energy metabolism. Required for oscillatory expression of clock genes, such as BMAL1 and NR1D1, through the coactivation of RORA and RORC, and metabolic genes, such as PDK4 and PEPCK. In Bos taurus (Bovine), this protein is Peroxisome proliferator-activated receptor gamma coactivator 1-alpha (PPARGC1A).